The primary structure comprises 635 residues: Cell pattern formation-associated protein stuA (635 aa).

Disordered regions lie at residues 1–21 (MNQTQPYMDVHSSHLSSAQPY) and 63–82 (SGVASSQTAPPPPSTSMSSQ). An HTH APSES-type domain is found at 129 to 235 (RVTATLWEDE…HNIGGLLYHP (107 aa)). Residues 163-184 (GTKLLNVAGMTRGRRDGILKSE) constitute a DNA-binding region (H-T-H motif). 2 disordered regions span residues 246–480 (QESQ…ASRS) and 498–635 (SQLT…PRRR). Low complexity-rich tracts occupy residues 276-294 (MQTSIPSQMPQPPTMSSQP) and 312-325 (SASSLMGLSNQSSS). Polar residues predominate over residues 326–355 (YDWNNQGMNSGVPNTQPLSIDTTLSNTRSM). Low complexity predominate over residues 356–380 (PTTPATTPPGNNLQGMQSYQSQSGY). The span at 460–469 (APEHESEYVQ) shows a compositional bias: basic and acidic residues. 2 stretches are compositionally biased toward polar residues: residues 498–513 (SQLTNDITGSPQQNGS) and 539–571 (AASSLYNIVSDTRGSSNGAGSENYTVASNTAPT). Residues 582-605 (KRGREDDDMGRPDSQGDYESKRRR) form a nuclear localization domain region. Positions 583-592 (RGREDDDMGR) are enriched in basic and acidic residues.

It belongs to the EFG1/PHD1/stuA family.

Its function is as follows. Transcription factor that regulates asexual reproduction. Binds the StuA-response elements (StRE) with the consensus sequence 5'-(A/T)CGCG(T/A)N(A/C)-3' at the promoters of target genes. Controls the expression of 6 secondary metabolite biosynthetic clusters including 2 involved in the synthesis of alkaloids (fumigaclavine and fumitremorgen), 2 clusters of the ETP class (gliotoxin and an unknown ETP-like toxin), a cluster predicted to produce pseurotin A, and the product of the last cluster is unknown. Controls the production of ergot alkaloids during conidiophore development. Controls expression of sspA and gliP. Involved in the induction of immunoglobulin E-independent mast cell degranulation. The sequence is that of Cell pattern formation-associated protein stuA from Aspergillus fumigatus (strain ATCC MYA-4609 / CBS 101355 / FGSC A1100 / Af293) (Neosartorya fumigata).